The primary structure comprises 247 residues: Cell division protein ZapD (247 aa).

It belongs to the ZapD family. Interacts with FtsZ.

The protein resides in the cytoplasm. In terms of biological role, cell division factor that enhances FtsZ-ring assembly. Directly interacts with FtsZ and promotes bundling of FtsZ protofilaments, with a reduction in FtsZ GTPase activity. The polypeptide is Cell division protein ZapD (Salmonella agona (strain SL483)).